The primary structure comprises 115 residues: Large ribosomal subunit protein bL19 (115 aa).

The protein belongs to the bacterial ribosomal protein bL19 family.

In terms of biological role, this protein is located at the 30S-50S ribosomal subunit interface and may play a role in the structure and function of the aminoacyl-tRNA binding site. The sequence is that of Large ribosomal subunit protein bL19 from Latilactobacillus sakei subsp. sakei (strain 23K) (Lactobacillus sakei subsp. sakei).